The primary structure comprises 509 residues: Dihydrolipoyl dehydrogenase, mitochondrial (509 aa).

A mitochondrion-targeting transit peptide spans 1-35 (MQSWSRVYCSLAKRGHFNRISHGLQGLSAVPLRTY). Lys-66 carries the post-translational modification N6-acetyllysine; alternate. Position 66 is an N6-succinyllysine; alternate (Lys-66). FAD contacts are provided by residues 71–80 (EKNETLGGTC) and Lys-89. The cysteines at positions 80 and 85 are disulfide-linked. N6-acetyllysine; alternate occurs at positions 104, 122, 132, and 143. An N6-succinyllysine; alternate mark is found at Lys-104, Lys-122, Lys-132, and Lys-143. Gly-154 is a binding site for FAD. Residues Lys-159 and Lys-166 each carry the N6-succinyllysine modification. An FAD-binding site is contributed by 183 to 185 (TGS). Residues 220-227 (GAGVIGVE) and Glu-243 contribute to the NAD(+) site. N6-succinyllysine is present on residues Lys-273 and Lys-277. Residue Val-278 participates in NAD(+) binding. Phosphoserine is present on residues Ser-285 and Ser-297. Gly-314 provides a ligand contact to NAD(+). Residue Lys-346 is modified to N6-acetyllysine. Residues Asp-355 and 361–364 (MLAH) contribute to the FAD site. Residue Lys-410 is modified to N6-acetyllysine; alternate. At Lys-410 the chain carries N6-succinyllysine; alternate. Lys-417 and Lys-420 each carry N6-acetyllysine. Lys-430 is subject to N6-succinyllysine. His-487 serves as the catalytic Proton acceptor. Ser-502 carries the phosphoserine modification. Lys-505 carries the post-translational modification N6-acetyllysine; alternate. At Lys-505 the chain carries N6-succinyllysine; alternate.

It belongs to the class-I pyridine nucleotide-disulfide oxidoreductase family. In terms of assembly, homodimer. Part of the multimeric pyruvate dehydrogenase complex that contains multiple copies of pyruvate dehydrogenase (subunits PDHA (PDHA1 or PDHA2) and PDHB, E1), dihydrolipoamide acetyltransferase (DLAT, E2) and lipoamide dehydrogenase (DLD, E3). These subunits are bound to an inner core composed of about 48 DLAT and 12 PDHX molecules (by non covalent bonds). The 2-oxoglutarate dehydrogenase complex is composed of OGDH (2-oxoglutarate dehydrogenase; E1), DLST (dihydrolipoamide succinyltransferase; E2), DLD (dihydrolipoamide dehydrogenase; E3) and the assembly factor KGD4. It contains multiple copies of the three enzymatic components (E1, E2 and E3). In the nucleus, the 2-oxoglutarate dehydrogenase complex associates with KAT2A. Interacts with PDHX. FAD is required as a cofactor. Post-translationally, tyrosine phosphorylated.

Its subcellular location is the mitochondrion matrix. The protein resides in the nucleus. It is found in the cell projection. It localises to the cilium. The protein localises to the flagellum. Its subcellular location is the cytoplasmic vesicle. The protein resides in the secretory vesicle. It is found in the acrosome. It carries out the reaction N(6)-[(R)-dihydrolipoyl]-L-lysyl-[protein] + NAD(+) = N(6)-[(R)-lipoyl]-L-lysyl-[protein] + NADH + H(+). Disruption of native heterodimer state inhibits primary dihydrolipoamide dehydrogenase activity and induces serine protease activity. Functionally, lipoamide dehydrogenase is a component of the glycine cleavage system as well as an E3 component of three alpha-ketoacid dehydrogenase complexes (pyruvate-, alpha-ketoglutarate-, and branched-chain amino acid-dehydrogenase complex). The 2-oxoglutarate dehydrogenase complex is mainly active in the mitochondrion. A fraction of the 2-oxoglutarate dehydrogenase complex also localizes in the nucleus and is required for lysine succinylation of histones: associates with KAT2A on chromatin and provides succinyl-CoA to histone succinyltransferase KAT2A. In monomeric form may have additional moonlighting function as serine protease. Involved in the hyperactivation of spermatazoa during capacitation and in the spermatazoal acrosome reaction. The sequence is that of Dihydrolipoyl dehydrogenase, mitochondrial (DLD) from Homo sapiens (Human).